Reading from the N-terminus, the 523-residue chain is Bifunctional purine biosynthesis protein PurH (523 aa).

An MGS-like domain is found at 1–145 (MIKQALLSVS…KNHRDVTVIV (145 aa)).

This sequence belongs to the PurH family.

The catalysed reaction is (6R)-10-formyltetrahydrofolate + 5-amino-1-(5-phospho-beta-D-ribosyl)imidazole-4-carboxamide = 5-formamido-1-(5-phospho-D-ribosyl)imidazole-4-carboxamide + (6S)-5,6,7,8-tetrahydrofolate. It carries out the reaction IMP + H2O = 5-formamido-1-(5-phospho-D-ribosyl)imidazole-4-carboxamide. It functions in the pathway purine metabolism; IMP biosynthesis via de novo pathway; 5-formamido-1-(5-phospho-D-ribosyl)imidazole-4-carboxamide from 5-amino-1-(5-phospho-D-ribosyl)imidazole-4-carboxamide (10-formyl THF route): step 1/1. Its pathway is purine metabolism; IMP biosynthesis via de novo pathway; IMP from 5-formamido-1-(5-phospho-D-ribosyl)imidazole-4-carboxamide: step 1/1. The protein is Bifunctional purine biosynthesis protein PurH of Cupriavidus pinatubonensis (strain JMP 134 / LMG 1197) (Cupriavidus necator (strain JMP 134)).